The chain runs to 117 residues: Peptidyl-tRNA hydrolase (117 aa).

The protein belongs to the PTH2 family.

The protein localises to the cytoplasm. The enzyme catalyses an N-acyl-L-alpha-aminoacyl-tRNA + H2O = an N-acyl-L-amino acid + a tRNA + H(+). In terms of biological role, the natural substrate for this enzyme may be peptidyl-tRNAs which drop off the ribosome during protein synthesis. The polypeptide is Peptidyl-tRNA hydrolase (Thermoplasma acidophilum (strain ATCC 25905 / DSM 1728 / JCM 9062 / NBRC 15155 / AMRC-C165)).